The sequence spans 339 residues: MSNRKLFTPWSLKGVTLKNRIVMSPMCMYSSHEKDGKVQPFHMTHYISRAVGQVGLIMVEATAVTPQGRISDQDLGIWDDAHIDGLAALTSQIKTYGSKTAIQLAHAGRKAEVEGTIYGPSAIPFDENSRTPVEMTKEDIKETVQAFKKGAERAKAAGFDIIEIHGAHGYLINEFLSPLSNKREDEYGGSPENRYRLLREVIDAVKEVWAGPLFVRVSASDYKTKGLDVADYVGFAKWMKEQGVDLIDVSSGAVVPADINVFPGYQVGFADTIRAQAEIQTGAVGLITSGLQAEEILQNGRADLIFVARELLRDPYWPKTAAKQLNTKIEGPVQYDRAW.

Position 24–27 (24–27) interacts with FMN; it reads SPMC. Tyrosine 29 contacts substrate. Positions 61 and 103 each coordinate FMN. 165–168 is a binding site for substrate; that stretch reads HGAH. FMN is bound by residues arginine 216 and 308-309; that span reads AR.

Belongs to the NADH:flavin oxidoreductase/NADH oxidase family. NamA subfamily. Homotetramer. Requires FMN as cofactor.

It catalyses the reaction A + NADPH + H(+) = AH2 + NADP(+). Catalyzes the reduction of the double bond of an array of alpha,beta-unsaturated aldehydes and ketones. It also reduces the nitro group of nitroester and nitroaromatic compounds. It could have a role in detoxification processes. This Bacillus licheniformis (strain ATCC 14580 / DSM 13 / JCM 2505 / CCUG 7422 / NBRC 12200 / NCIMB 9375 / NCTC 10341 / NRRL NRS-1264 / Gibson 46) protein is NADPH dehydrogenase.